Here is an 815-residue protein sequence, read N- to C-terminus: Ataxin-1 (815 aa).

The span at 1–41 (MKSNQERSNECLPPKKREIPATSRSSEEKAPTLPSDNHRVE) shows a compositional bias: basic and acidic residues. Positions 1-63 (MKSNQERSNE…GHGGGRHGPA (63 aa)) are disordered. K16 is covalently cross-linked (Glycyl lysine isopeptide (Lys-Gly) (interchain with G-Cter in SUMO)). Positions 49–61 (NPGGRGHGGGRHG) are enriched in gly residues. Residues S82 and S88 each carry the phosphoserine modification. Disordered stretches follow at residues 185-270 (GSLS…PVHL), 329-355 (EKSRRYGAPSSADLGLGKAGGKSVPHP), and 397-424 (VQQATHREASPSTLNDKSGLHLGKPGHR). K194 is covalently cross-linked (Glycyl lysine isopeptide (Lys-Gly) (interchain with G-Cter in SUMO)). Residues 197-226 (QQQQQQQQQQQQHQHQQQQQQQQQQQQQQH) are compositionally biased toward low complexity. 2 positions are modified to phosphoserine: S238 and S253. The span at 243–260 (QQNQYVHISSSPQNTGRT) shows a compositional bias: polar residues. Residues 494-604 (VGSTDMEASG…TEDFIQSAEI (111 aa)) form a self-association region. The interval 538-815 (LVTQAAYPAM…CIEGRSNVGK (278 aa)) is interaction with USP7. The interval 540–766 (TQAAYPAMVQ…FLTKIEPSKP (227 aa)) is RNA-binding. The AXH domain occupies 562–693 (SPAAAPPTLP…SLTLKNLKNG (132 aa)). Residues K609, K696, and K745 each participate in a glycyl lysine isopeptide (Lys-Gly) (interchain with G-Cter in SUMO) cross-link. The interval 762–798 (EPSKPAATRKRRWSAPESRKLEKSEDEPPLTLPKPSL) is disordered. A Phosphoserine modification is found at S775. The Nuclear localization signal motif lies at 794–797 (PKPS).

It belongs to the ATXN1 family. As to quaternary structure, homooligomer. Interacts with CIC. Interacts with ANP32A, PQBP1, UBQLN4, ATXN1L and USP7. Directly interacts with RBPJ; this interaction is disrupted in the presence of Notch intracellular domain. Competes with ATXN1L for RBPJ-binding. Found in a complex with CIC and ATXN1L. Post-translationally, ubiquitinated by UBE3A, leading to its degradation by the proteasome. The presence of expanded poly-Gln repeats in spinocerebellar ataxia 1 (SCA1) patients impairs ubiquitination and degradation, leading to accumulation of ATXN1 in neurons and subsequent toxicity. In terms of processing, phosphorylation at Ser-775 increases the pathogenicity of proteins with an expanded polyglutamine tract. Sumoylation is dependent on nuclear localization and phosphorylation at Ser-775. It is reduced in the presence of an expanded polyglutamine tract. Widely expressed throughout the body.

It localises to the cytoplasm. It is found in the nucleus. In terms of biological role, chromatin-binding factor that repress Notch signaling in the absence of Notch intracellular domain by acting as a CBF1 corepressor. Binds to the HEY promoter and might assist, along with NCOR2, RBPJ-mediated repression. Binds RNA in vitro. May be involved in RNA metabolism. In concert with CIC and ATXN1L, involved in brain development. The polypeptide is Ataxin-1 (ATXN1) (Homo sapiens (Human)).